The sequence spans 89 residues: Small ribosomal subunit protein uS15 (89 aa).

The protein belongs to the universal ribosomal protein uS15 family. In terms of assembly, part of the 30S ribosomal subunit. Forms a bridge to the 50S subunit in the 70S ribosome, contacting the 23S rRNA.

Its function is as follows. One of the primary rRNA binding proteins, it binds directly to 16S rRNA where it helps nucleate assembly of the platform of the 30S subunit by binding and bridging several RNA helices of the 16S rRNA. In terms of biological role, forms an intersubunit bridge (bridge B4) with the 23S rRNA of the 50S subunit in the ribosome. The sequence is that of Small ribosomal subunit protein uS15 from Salmonella schwarzengrund (strain CVM19633).